The sequence spans 463 residues: Fumarate hydratase class II (463 aa).

Substrate is bound by residues 95 to 97, 126 to 129, 136 to 138, and Thr184; these read SGT, HPND, and SSN. His185 serves as the catalytic Proton donor/acceptor. Ser315 is an active-site residue. Substrate is bound by residues Ser316 and 321–323; that span reads KIN.

It belongs to the class-II fumarase/aspartase family. Fumarase subfamily. Homotetramer.

It localises to the cytoplasm. It catalyses the reaction (S)-malate = fumarate + H2O. It functions in the pathway carbohydrate metabolism; tricarboxylic acid cycle; (S)-malate from fumarate: step 1/1. In terms of biological role, involved in the TCA cycle. Catalyzes the stereospecific interconversion of fumarate to L-malate. In Chlamydia muridarum (strain MoPn / Nigg), this protein is Fumarate hydratase class II.